The primary structure comprises 489 residues: Rhamnulokinase (489 aa).

13–17 (ASSGR) lines the ATP pocket. The cysteines at positions 68 and 222 are disulfide-linked. Residues G83 and 236–238 (HDT) contribute to the substrate site. D237 serves as the catalytic Proton acceptor. ATP is bound at residue T259. N296 contributes to the substrate binding site. Q304 is an ATP binding site. The cysteines at positions 353 and 370 are disulfide-linked. G402 contributes to the ATP binding site. The cysteines at positions 413 and 417 are disulfide-linked.

This sequence belongs to the rhamnulokinase family. Mg(2+) is required as a cofactor.

The enzyme catalyses L-rhamnulose + ATP = L-rhamnulose 1-phosphate + ADP + H(+). The protein operates within carbohydrate degradation; L-rhamnose degradation; glycerone phosphate from L-rhamnose: step 2/3. Functionally, involved in the catabolism of L-rhamnose (6-deoxy-L-mannose). Catalyzes the transfer of the gamma-phosphate group from ATP to the 1-hydroxyl group of L-rhamnulose to yield L-rhamnulose 1-phosphate. This is Rhamnulokinase from Salmonella dublin (strain CT_02021853).